Consider the following 802-residue polypeptide: Serine/threonine-protein kinase zyg-8 (802 aa).

Residues 1-13 (MPQTSAWQLNDTT) show a composition bias toward polar residues. The segment at 1–102 (MPQTSAWQLN…SAPSTSSAHR (102 aa)) is disordered. The segment covering 15 to 24 (RPPPPPPPPG) has biased composition (pro residues). The segment covering 89-99 (SPSSSAPSTSS) has biased composition (low complexity). Doublecortin domains are found at residues 211–298 (KRLR…VDYS) and 340–423 (RIIK…ADDL). The segment at 430 to 470 (HKSVGSGTSSNMRRTSRRSTMPNRNESLRHDRSGSVIPDQD) is disordered. Residues 434-454 (GSGTSSNMRRTSRRSTMPNRN) are compositionally biased toward low complexity. The Protein kinase domain maps to 482-743 (FQLVRLIGDG…AGELLNDEWM (262 aa)). Residues 488 to 496 (IGDGNTAVV) and Lys-512 contribute to the ATP site. The active-site Proton acceptor is Asp-604.

This sequence belongs to the protein kinase superfamily. CAMK Ser/Thr protein kinase family. CaMK subfamily. Interacts with tac-1. As to expression, expressed in AFD thermosensory neurons. Expressed in cells near the nerve ring, in motor neurons in the ventral nerve cord and in the six touch receptor neurons including ALML/R, PLML/R and AVM and PVM. Expressed in hypodermal and neural tissues and in the germline.

It is found in the cytoplasm. The protein localises to the cytoskeleton. The protein resides in the microtubule organizing center. It localises to the centrosome. Its subcellular location is the spindle. The enzyme catalyses L-seryl-[protein] + ATP = O-phospho-L-seryl-[protein] + ADP + H(+). It carries out the reaction L-threonyl-[protein] + ATP = O-phospho-L-threonyl-[protein] + ADP + H(+). In terms of biological role, probable kinase. Kinase activity may be involved in positioning of spindle poles in meiosis and mitosis. Plays a role in spindle positioning during asymmetric division of one-cell stage embryos. Affects spindle position by promoting microtubule assembly during anaphase. Plays a role in the assembly and stability of oocyte spindle, perhaps balancing the forces in the spindle and maintaining their morphology during metaphase. Plays a role in cell division and in embryonic viability up until gastrulation. Required for neuronal morphology and polarity and restricting ectopic process outgrowth; probably as a result of a role in maintaining microtubule integrity. Involved in maintaining neuronal microtubule number, length and packing. May promote axonal and synaptic growth. Plays a role in regulating thermotaxis responses in AFD thermosensory neurons. Required for touch sensitivity in adult touch response receptor neurons. The polypeptide is Serine/threonine-protein kinase zyg-8 (Caenorhabditis elegans).